Reading from the N-terminus, the 227-residue chain is Cytochrome c oxidase subunit 2 (227 aa).

The Mitochondrial intermembrane portion of the chain corresponds to 1–14; it reads MAHAVQYGFQDAAA. The chain crosses the membrane as a helical span at residues 15 to 45; it reads PIMEELLYFHDHTLMIVFMISSLVLYIISLM. The Mitochondrial matrix portion of the chain corresponds to 46 to 59; sequence LSTELTHTSTMDAQ. Residues 60–87 traverse the membrane as a helical segment; sequence EVETVWTILPAVILILIALPSLRILYMM. At 88–227 the chain is on the mitochondrial intermembrane side; that stretch reads DEIETPSLTL…YFEEWLLKTL (140 aa). Cu cation is bound by residues H161, C196, E198, C200, H204, and M207. E198 provides a ligand contact to Mg(2+). Y218 bears the Phosphotyrosine mark.

This sequence belongs to the cytochrome c oxidase subunit 2 family. Component of the cytochrome c oxidase (complex IV, CIV), a multisubunit enzyme composed of 14 subunits. The complex is composed of a catalytic core of 3 subunits MT-CO1, MT-CO2 and MT-CO3, encoded in the mitochondrial DNA, and 11 supernumerary subunits COX4I, COX5A, COX5B, COX6A, COX6B, COX6C, COX7A, COX7B, COX7C, COX8 and NDUFA4, which are encoded in the nuclear genome. The complex exists as a monomer or a dimer and forms supercomplexes (SCs) in the inner mitochondrial membrane with NADH-ubiquinone oxidoreductase (complex I, CI) and ubiquinol-cytochrome c oxidoreductase (cytochrome b-c1 complex, complex III, CIII), resulting in different assemblies (supercomplex SCI(1)III(2)IV(1) and megacomplex MCI(2)III(2)IV(2)). Found in a complex with TMEM177, COA6, COX18, COX20, SCO1 and SCO2. Interacts with TMEM177 in a COX20-dependent manner. Interacts with COX20. Interacts with COX16. The cofactor is Cu cation.

It is found in the mitochondrion inner membrane. The enzyme catalyses 4 Fe(II)-[cytochrome c] + O2 + 8 H(+)(in) = 4 Fe(III)-[cytochrome c] + 2 H2O + 4 H(+)(out). Its function is as follows. Component of the cytochrome c oxidase, the last enzyme in the mitochondrial electron transport chain which drives oxidative phosphorylation. The respiratory chain contains 3 multisubunit complexes succinate dehydrogenase (complex II, CII), ubiquinol-cytochrome c oxidoreductase (cytochrome b-c1 complex, complex III, CIII) and cytochrome c oxidase (complex IV, CIV), that cooperate to transfer electrons derived from NADH and succinate to molecular oxygen, creating an electrochemical gradient over the inner membrane that drives transmembrane transport and the ATP synthase. Cytochrome c oxidase is the component of the respiratory chain that catalyzes the reduction of oxygen to water. Electrons originating from reduced cytochrome c in the intermembrane space (IMS) are transferred via the dinuclear copper A center (CU(A)) of subunit 2 and heme A of subunit 1 to the active site in subunit 1, a binuclear center (BNC) formed by heme A3 and copper B (CU(B)). The BNC reduces molecular oxygen to 2 water molecules using 4 electrons from cytochrome c in the IMS and 4 protons from the mitochondrial matrix. The protein is Cytochrome c oxidase subunit 2 (MT-CO2) of Galago senegalensis (Northern lesser bushbaby).